Here is a 252-residue protein sequence, read N- to C-terminus: Nicotinamide/nicotinic acid mononucleotide adenylyltransferase 3 (252 aa).

Residues serine 14 and phenylalanine 15 each coordinate NAD(+). ATP is bound by residues histidine 22 and lysine 56. NAD(+) is bound by residues tryptophan 90, threonine 93, glycine 135, and aspartate 137. Lysine 140 contacts ATP. Positions 147, 148, 167, and 198 each coordinate NAD(+). Residue 203–206 (TYIR) coordinates ATP.

This sequence belongs to the eukaryotic NMN adenylyltransferase family. In terms of assembly, homotetramer. The cofactor is Mg(2+). In terms of tissue distribution, expressed in lung and spleen with lower levels in placenta and kidney.

Its subcellular location is the mitochondrion. The enzyme catalyses beta-nicotinamide D-ribonucleotide + ATP + H(+) = diphosphate + NAD(+). It catalyses the reaction nicotinate beta-D-ribonucleotide + ATP + H(+) = deamido-NAD(+) + diphosphate. It participates in cofactor biosynthesis; NAD(+) biosynthesis; NAD(+) from nicotinamide D-ribonucleotide: step 1/1. It functions in the pathway cofactor biosynthesis; NAD(+) biosynthesis; deamido-NAD(+) from nicotinate D-ribonucleotide: step 1/1. With respect to regulation, activity is strongly inhibited by galotannin. Inhibited by P1-(adenosine-5')-P4-(nicotinic-acid-riboside-5')-tetraphosphate (Nap4AD). Catalyzes the formation of NAD(+) from nicotinamide mononucleotide (NMN) and ATP. Can also use the deamidated form; nicotinic acid mononucleotide (NaMN) as substrate with the same efficiency. Can use triazofurin monophosphate (TrMP) as substrate. Can also use GTP and ITP as nucleotide donors. Also catalyzes the reverse reaction, i.e. the pyrophosphorolytic cleavage of NAD(+). For the pyrophosphorolytic activity, can use NAD(+), NADH, NaAD, nicotinic acid adenine dinucleotide phosphate (NHD), nicotinamide guanine dinucleotide (NGD) as substrates. Fails to cleave phosphorylated dinucleotides NADP(+), NADPH and NaADP(+). Protects against axonal degeneration following injury. May be involved in the maintenance of axonal integrity. Also functions as a stress-response chaperone protein that prevents toxic aggregation of proteins; this function may be independent of its NAD(+) synthesis activity. The chain is Nicotinamide/nicotinic acid mononucleotide adenylyltransferase 3 from Homo sapiens (Human).